A 351-amino-acid polypeptide reads, in one-letter code: Probable cell division control protein 7 homolog 1 (351 aa).

A Protein kinase domain is found at 21-341; the sequence is YTPIEKIGEG…ASDALSHPFF (321 aa). ATP is bound by residues 27–35 and Lys-50; that span reads IGEGSFSVV. The active-site Proton acceptor is the Asp-137.

It belongs to the protein kinase superfamily. Ser/Thr protein kinase family. CDC7 subfamily. The cofactor is Mg(2+).

It catalyses the reaction L-seryl-[protein] + ATP = O-phospho-L-seryl-[protein] + ADP + H(+). The enzyme catalyses L-threonyl-[protein] + ATP = O-phospho-L-threonyl-[protein] + ADP + H(+). Serine/threonine-protein kinase. Needed for the initiation of DNA synthesis during mitosis as well as for synaptonemal complex formation and commitment to recombination during meiosis. In Encephalitozoon cuniculi (strain GB-M1) (Microsporidian parasite), this protein is Probable cell division control protein 7 homolog 1 (CDC7-1).